Consider the following 541-residue polypeptide: Phenazine N-monooxygenase PhzNO1 (541 aa).

FAD is bound by residues Asp39, 47-50, 59-60, Tyr65, and Ile112; these read TWYW and DT. Position 57–59 (57–59) interacts with NADP(+); it reads RAD. Residues 186 to 192, 209 to 210, and Trp492 each bind NADP(+); these read TGSTGVQ and RS.

Belongs to the FAD-binding monooxygenase family. The cofactor is FAD.

It catalyses the reaction 1,6-dihydroxyphenazine + NADPH + O2 = 1,6-dihydroxyphenazine N(5)-oxide + NADP(+) + H2O. It carries out the reaction 1,6-dihydroxyphenazine N(5)-oxide + NADPH + O2 = 1,6-dihydroxyphenazine N(5),N(10)-dioxide + NADP(+) + H2O. The catalysed reaction is 1-hydroxy-6-methoxyphenazine + NADPH + O2 = 1-hydroxy-6-methoxyphenazine N(10)-oxide + NADP(+) + H2O. The enzyme catalyses quinolin-8-ol + NADPH + O2 = 8-hydroxyquinoline N-oxide + NADP(+) + H2O. Involved in the biosynthesis of phenazine natural products including myxin, an N(5),N(10)-dioxide phenazine antiobiotic, which has antimicrobial activity. Catalyzes the aromatic N-oxidations of phenazines, such as 1,6-dihydroxyphenazine (DHP), 1,6-dihydroxyphenazine N(5)-oxide (DHPO) and 1-hydroxy-6-methoxyphenazine to produce DHPO, iodinin (1,6-dihydroxyphenazine N(5),N(10)-dioxide) and 1-hydroxy-6-methoxyphenazine N(10)-oxide, respectively. Also catalyzes the N-oxidation of 8-hydroxyquinoline, but not 6-hydroxyquinoline (6-HQ), quinoline, quinoxaline, quinine and 2-phenylpyridine. The polypeptide is Phenazine N-monooxygenase PhzNO1 (Lysobacter antibioticus).